We begin with the raw amino-acid sequence, 148 residues long: MKVIFLKDVKGKGKKGETKNVADGYANNFLIKNGYAVEANNAALSTLSAQKKKEDKLAAEELAEAKALKEKMENLTVELKAKSGEGGRLFGSITSKQIAQALEKTHGIKIDKRKMDLPEAIRALGHTKVPVKLHHEVTATLDVHVSEE.

The protein belongs to the bacterial ribosomal protein bL9 family.

Binds to the 23S rRNA. The chain is Large ribosomal subunit protein bL9 from Listeria monocytogenes serotype 4a (strain HCC23).